Consider the following 850-residue polypeptide: Translation initiation factor IF-2 (850 aa).

Disordered regions lie at residues 50–72 (LKSSHKSKAEEPRKITLQRKTTS) and 92–267 (FVQR…TGPV). Over residues 96 to 135 (SPEEIQAEQKREQEERRAAENAAREKADADARQRNEEQAR) the composition is skewed to basic and acidic residues. The span at 136 to 172 (RQAAQAPAAAPVAKAEPAPAAAAPAAPAVPDAPVSED) shows a compositional bias: low complexity. Basic and acidic residues-rich tracts occupy residues 173–210 (AAARAAERKKDEARRNESRTRDDDRRGGGVAGERRGEA) and 234–243 (TTDEESDGFR). Residues 244 to 257 (RGRGGKGKPKKRNQ) show a composition bias toward basic residues. In terms of domain architecture, tr-type G spans 350–517 (SRAPVVTVMG…AVLLQAEILE (168 aa)). The tract at residues 359–366 (GHVDHGKT) is G1. GTP is bound at residue 359-366 (GHVDHGKT). The interval 384-388 (GITQH) is G2. The segment at 405–408 (DTPG) is G3. GTP contacts are provided by residues 405 to 409 (DTPGH) and 459 to 462 (NKID). The G4 stretch occupies residues 459–462 (NKID). The interval 495–497 (SAK) is G5.

Belongs to the TRAFAC class translation factor GTPase superfamily. Classic translation factor GTPase family. IF-2 subfamily.

Its subcellular location is the cytoplasm. One of the essential components for the initiation of protein synthesis. Protects formylmethionyl-tRNA from spontaneous hydrolysis and promotes its binding to the 30S ribosomal subunits. Also involved in the hydrolysis of GTP during the formation of the 70S ribosomal complex. This chain is Translation initiation factor IF-2, found in Pseudomonas entomophila (strain L48).